Reading from the N-terminus, the 295-residue chain is Cyclin-G1 (295 aa).

This sequence belongs to the cyclin family. Cyclin G subfamily. In terms of tissue distribution, high levels in skeletal muscle, ovary, kidney and colon.

Its subcellular location is the nucleus. In terms of biological role, may play a role in growth regulation. Is associated with G2/M phase arrest in response to DNA damage. May be an intermediate by which p53 mediates its role as an inhibitor of cellular proliferation. This Homo sapiens (Human) protein is Cyclin-G1 (CCNG1).